The sequence spans 162 residues: 2-C-methyl-D-erythritol 2,4-cyclodiphosphate synthase (162 aa).

The a divalent metal cation site is built by aspartate 12 and histidine 14. Residues 12–14 (DVH) and 38–39 (HS) contribute to the 4-CDP-2-C-methyl-D-erythritol 2-phosphate site. Histidine 46 serves as a coordination point for a divalent metal cation. 4-CDP-2-C-methyl-D-erythritol 2-phosphate is bound by residues 60–62 (DIG), 65–69 (FPDTD), and arginine 146.

It belongs to the IspF family. In terms of assembly, homotrimer. The cofactor is a divalent metal cation.

It carries out the reaction 4-CDP-2-C-methyl-D-erythritol 2-phosphate = 2-C-methyl-D-erythritol 2,4-cyclic diphosphate + CMP. It participates in isoprenoid biosynthesis; isopentenyl diphosphate biosynthesis via DXP pathway; isopentenyl diphosphate from 1-deoxy-D-xylulose 5-phosphate: step 4/6. Its function is as follows. Involved in the biosynthesis of isopentenyl diphosphate (IPP) and dimethylallyl diphosphate (DMAPP), two major building blocks of isoprenoid compounds. Catalyzes the conversion of 4-diphosphocytidyl-2-C-methyl-D-erythritol 2-phosphate (CDP-ME2P) to 2-C-methyl-D-erythritol 2,4-cyclodiphosphate (ME-CPP) with a corresponding release of cytidine 5-monophosphate (CMP). In Bordetella petrii (strain ATCC BAA-461 / DSM 12804 / CCUG 43448), this protein is 2-C-methyl-D-erythritol 2,4-cyclodiphosphate synthase.